The chain runs to 188 residues: dCTP deaminase (188 aa).

Residues 111-116 (KSTYAR), 135-137 (TLE), Gln-156, Tyr-170, and Gln-180 contribute to the dCTP site. Residue Glu-137 is the Proton donor/acceptor of the active site.

The protein belongs to the dCTP deaminase family. Homotrimer.

The enzyme catalyses dCTP + H2O + H(+) = dUTP + NH4(+). It participates in pyrimidine metabolism; dUMP biosynthesis; dUMP from dCTP (dUTP route): step 1/2. In terms of biological role, catalyzes the deamination of dCTP to dUTP. The chain is dCTP deaminase from Methylococcus capsulatus (strain ATCC 33009 / NCIMB 11132 / Bath).